Reading from the N-terminus, the 74-residue chain is UPF0154 protein LSL_0542 (74 aa).

A helical membrane pass occupies residues 5–25; it reads IWVLIVIIAAVLGFVGGFFAA.

The protein belongs to the UPF0154 family.

It is found in the cell membrane. This chain is UPF0154 protein LSL_0542, found in Ligilactobacillus salivarius (strain UCC118) (Lactobacillus salivarius).